Reading from the N-terminus, the 93-residue chain is Co-chaperonin GroES (93 aa).

This sequence belongs to the GroES chaperonin family. Heptamer of 7 subunits arranged in a ring. Interacts with the chaperonin GroEL.

Its subcellular location is the cytoplasm. Its function is as follows. Together with the chaperonin GroEL, plays an essential role in assisting protein folding. The GroEL-GroES system forms a nano-cage that allows encapsulation of the non-native substrate proteins and provides a physical environment optimized to promote and accelerate protein folding. GroES binds to the apical surface of the GroEL ring, thereby capping the opening of the GroEL channel. The sequence is that of Co-chaperonin GroES from Geobacillus kaustophilus (strain HTA426).